The following is a 283-amino-acid chain: Release factor glutamine methyltransferase (283 aa).

S-adenosyl-L-methionine is bound by residues 121 to 125, Asp144, and Asn188; that span reads GTGSG. 188–191 provides a ligand contact to substrate; sequence NPPY.

This sequence belongs to the protein N5-glutamine methyltransferase family. PrmC subfamily.

It catalyses the reaction L-glutaminyl-[peptide chain release factor] + S-adenosyl-L-methionine = N(5)-methyl-L-glutaminyl-[peptide chain release factor] + S-adenosyl-L-homocysteine + H(+). Methylates the class 1 translation termination release factors RF1/PrfA and RF2/PrfB on the glutamine residue of the universally conserved GGQ motif. The protein is Release factor glutamine methyltransferase of Bacillus cereus (strain ATCC 14579 / DSM 31 / CCUG 7414 / JCM 2152 / NBRC 15305 / NCIMB 9373 / NCTC 2599 / NRRL B-3711).